The following is a 316-amino-acid chain: Apolipoprotein E (316 aa).

Positions 1 to 18 (MKVLWAALVVTLLAGCGA) are cleaved as a signal peptide. Repeat copies occupy residues 83-104 (ALMDDTMKEVKACKSELEEQLG), 105-126 (PVTEETKARVSKELQAAQARLG), 127-148 (ADMEEVRSRLAQYRGELQAMVG), 149-170 (QSTEELRGRLSAHLRKLRKRLL), 171-192 (RDAEDLQRRLAVYQAGIREGAA), 193-214 (RSVNTLREHLGPLAEQAATVHT), 215-232 (LVSKPLQERAEAWAQRLR), and 233-254 (GRLEKAGFPVGDRLDEVREQVQ). An 8 X 22 AA approximate tandem repeats region spans residues 83–254 (ALMDDTMKEV…RLDEVREQVQ (172 aa)). Residues 161–171 (HLRKLRKRLLR) form an LDL and other lipoprotein receptors binding region. Residue 165-168 (LRKR) participates in heparin binding. The segment at 213–289 (HTLVSKPLQE…SWFEPLVQDM (77 aa)) is lipid-binding and lipoprotein association. 228 to 235 (AQRLRGRL) serves as a coordination point for heparin. The interval 265–316 (NQVRLQAEAFQGRLKSWFEPLVQDMQQKWAELVEKVQLAVGAVPTSVPSEKQ) is homooligomerization. A specificity for association with VLDL region spans residues 277–289 (RLKSWFEPLVQDM).

The protein belongs to the apolipoprotein A1/A4/E family. Homotetramer. May interact with ABCA1; functionally associated with ABCA1 in the biogenesis of HDLs. May interact with APP/A4 amyloid-beta peptide; the interaction is extremely stable in vitro but its physiological significance is unclear. May interact with MAPT. May interact with MAP2. In the cerebrospinal fluid, interacts with secreted SORL1. Interacts with PMEL; this allows the loading of PMEL luminal fragment on ILVs to induce fibril nucleation. APOE exists as multiple glycosylated and sialylated glycoforms within cells and in plasma. The extent of glycosylation and sialylation are tissue and context specific. Post-translationally, glycated in plasma VLDL. In terms of processing, phosphorylated by FAM20C in the extracellular medium.

It localises to the secreted. The protein localises to the extracellular space. The protein resides in the extracellular matrix. Its subcellular location is the extracellular vesicle. It is found in the endosome. It localises to the multivesicular body. Functionally, APOE is an apolipoprotein, a protein associating with lipid particles, that mainly functions in lipoprotein-mediated lipid transport between organs via the plasma and interstitial fluids. APOE is a core component of plasma lipoproteins and is involved in their production, conversion and clearance. Apolipoproteins are amphipathic molecules that interact both with lipids of the lipoprotein particle core and the aqueous environment of the plasma. As such, APOE associates with chylomicrons, chylomicron remnants, very low density lipoproteins (VLDL) and intermediate density lipoproteins (IDL) but shows a preferential binding to high-density lipoproteins (HDL). It also binds a wide range of cellular receptors including the LDL receptor/LDLR and the very low-density lipoprotein receptor/VLDLR that mediate the cellular uptake of the APOE-containing lipoprotein particles. Finally, APOE also has a heparin-binding activity and binds heparan-sulfate proteoglycans on the surface of cells, a property that supports the capture and the receptor-mediated uptake of APOE-containing lipoproteins by cells. The chain is Apolipoprotein E (APOE) from Diceros bicornis (Black rhinoceros).